The chain runs to 470 residues: Pyruvate kinase I (470 aa).

R32 contacts substrate. Positions 34, 36, 66, and 67 each coordinate K(+). An ATP-binding site is contributed by 34 to 37 (NFSH). 2 residues coordinate ATP: R73 and K156. Residue K220 participates in substrate binding. A Mg(2+)-binding site is contributed by E222. Residues G245, D246, and T278 each contribute to the substrate site. D246 is a binding site for Mg(2+).

This sequence belongs to the pyruvate kinase family. As to quaternary structure, homotetramer. Mg(2+) serves as cofactor. Requires K(+) as cofactor.

The catalysed reaction is pyruvate + ATP = phosphoenolpyruvate + ADP + H(+). It functions in the pathway carbohydrate degradation; glycolysis; pyruvate from D-glyceraldehyde 3-phosphate: step 5/5. With respect to regulation, belongs to type I PK; fructose 1,6-bisphosphate-activated. Catalyzes the formation of pyruvate in the last step of glycolysis, it is irreversible under physiological conditions. The reaction is critical for the control of metabolic flux in the second part of glycolysis. In Salmonella typhimurium (strain LT2 / SGSC1412 / ATCC 700720), this protein is Pyruvate kinase I (pykF).